The primary structure comprises 660 residues: Acyl-coenzyme A oxidase acox-1.3 (660 aa).

FAD is bound by residues 146 to 149 (YAQT), 154 to 155 (GT), and glycine 188. Residues 282 to 285 (KIGY) and arginine 292 each bind substrate. FAD is bound by residues arginine 317 and 337–340 (QQHR). ATP is bound by residues histidine 339, serine 389, histidine 393, and glutamine 401. A substrate-binding site is contributed by 430 to 431 (YE). Residue glutamate 431 is the Proton acceptor of the active site. Residue glutamate 433 coordinates FAD. ATP-binding positions include 524 to 527 (RASR) and tyrosine 572. A Microbody targeting signal motif is present at residues 658–660 (AKL).

It belongs to the acyl-CoA oxidase family. In terms of assembly, forms a heterodimer with acox-1.1; the interaction may be important for the stability of acox-1.3. It depends on FAD as a cofactor.

It localises to the peroxisome. The enzyme catalyses asc-C7-CoA + O2 = asc-DeltaC7-CoA + H2O2. It participates in lipid metabolism; peroxisomal fatty acid beta-oxidation. With respect to regulation, activated by ATP. ATP binding leads to a conformational change that promotes FAD cofactor binding and enzyme activity. ATP binding likely occurs during acox-1.3 folding and/or dimer formation. In terms of biological role, involved in the first step of peroxisomal beta-oxidation by catalyzing the desaturation of fatty acid-derived side chains of ascaroside pheromones, which regulates development and behavior. Specifically, shortens ascarosides with a 7-carbon side chain (asc-C7). Does not catalyze the desaturation of fatty acids or hydroxylated fatty acids. Involved in the biosynthesis of asc-C6-MK (daumone 2) and asc-delta-C9 (daumone 3) but not asc-C7 (daumone 1); daumones are pheromones produced during unfavourable growth conditions which promote entry into the dauer stage. The sequence is that of Acyl-coenzyme A oxidase acox-1.3 from Caenorhabditis elegans.